The following is a 499-amino-acid chain: Maturase K (499 aa).

It belongs to the intron maturase 2 family. MatK subfamily.

It localises to the plastid. The protein resides in the chloroplast. Functionally, usually encoded in the trnK tRNA gene intron. Probably assists in splicing its own and other chloroplast group II introns. This Ceratonia siliqua (Carob) protein is Maturase K.